A 471-amino-acid polypeptide reads, in one-letter code: Sestrin-2 (471 aa).

Residue Met-1 is modified to N-acetylmethionine. Positions 57–230 (GLEALMSSGR…APSPPSEQST (174 aa)) are N-terminal domain; mediates the alkylhydroperoxide reductase activity. Cys-116 acts as the Cysteine sulfenic acid (-SOH) intermediate in catalysis. Lys-166 is covalently cross-linked (Glycyl lysine isopeptide (Lys-Gly) (interchain with G-Cter in ubiquitin)). The tract at residues 212–241 (DPEGSPAPQAPSPPSEQSTPPSRDSLNHSG) is disordered. At Ser-240 the chain carries Phosphoserine. The C-terminal domain; mediates TORC1 regulation stretch occupies residues 299-471 (ANPDMLCFVE…ALRAITRYMT (173 aa)). L-leucine is bound by residues 365 to 368 (TYNT), Thr-377, and Glu-442.

The protein belongs to the sestrin family. In terms of assembly, interacts with the GATOR2 complex which is composed of MIOS, SEC13, SEH1L, WDR24 and WDR59; the interaction is negatively regulated by leucine. Conveys leucine availability via direct interaction with SEH1L and WDR24 components of the GATOR2 complex. Interacts with RRAGA, RRAGB, RRAGC and RRAGD; may function as a guanine nucleotide dissociation inhibitor for RRAGs and regulate them. May interact with the TORC2 complex. Interacts with KEAP1, RBX1, SQSTM and ULK1; to regulate the degradation of KEAP1. May also associate with the complex composed of TSC1, TSC2 and the AMP-responsive protein kinase/AMPK to regulate TORC1 signaling. May interact with PRDX1. In terms of processing, phosphorylated by ULK1 at multiple sites. Post-translationally, ubiquitinated at Lys-166 by RNF167 via 'Lys-63'-linked polyubiquitination in response to leucine deprivation: ubiquitination promotes SESN2-interaction with the GATOR2 complex, leading to inhibit the TORC1 signaling pathway. Deubiquitinated at Lys-166 by STAMBPL1, promoting the TORC1 signaling pathway. Ubiquitinated by RNF186; ubiquitination mediates proteasomal degradation.

The protein localises to the cytoplasm. It carries out the reaction a hydroperoxide + L-cysteinyl-[protein] = S-hydroxy-L-cysteinyl-[protein] + an alcohol. In terms of biological role, functions as an intracellular leucine sensor that negatively regulates the mTORC1 signaling pathway through the GATOR complex. In absence of leucine, binds the GATOR subcomplex GATOR2 and prevents mTORC1 signaling. Binding of leucine to SESN2 disrupts its interaction with GATOR2 thereby activating the TORC1 signaling pathway. This stress-inducible metabolic regulator also plays a role in protection against oxidative and genotoxic stresses. May negatively regulate protein translation in response to endoplasmic reticulum stress, via mTORC1. May positively regulate the transcription by NFE2L2 of genes involved in the response to oxidative stress by facilitating the SQSTM1-mediated autophagic degradation of KEAP1. May also mediate TP53 inhibition of TORC1 signaling upon genotoxic stress. Moreover, may prevent the accumulation of reactive oxygen species (ROS) through the alkylhydroperoxide reductase activity born by the N-terminal domain of the protein. Was originally reported to contribute to oxidative stress resistance by reducing PRDX1. However, this could not be confirmed. The sequence is that of Sestrin-2 from Bos taurus (Bovine).